Reading from the N-terminus, the 321-residue chain is Transaldolase (321 aa).

The active-site Schiff-base intermediate with substrate is Lys132.

Belongs to the transaldolase family. Type 1 subfamily. Homodimer.

The protein localises to the cytoplasm. The catalysed reaction is D-sedoheptulose 7-phosphate + D-glyceraldehyde 3-phosphate = D-erythrose 4-phosphate + beta-D-fructose 6-phosphate. It participates in carbohydrate degradation; pentose phosphate pathway; D-glyceraldehyde 3-phosphate and beta-D-fructose 6-phosphate from D-ribose 5-phosphate and D-xylulose 5-phosphate (non-oxidative stage): step 2/3. Transaldolase is important for the balance of metabolites in the pentose-phosphate pathway. This is Transaldolase from Rhizobium leguminosarum bv. trifolii (strain WSM2304).